We begin with the raw amino-acid sequence, 519 residues long: MNALLIAGTTSDAGKSVVAAGVCRWLARTGARVAPFKAQNMSNNSVVTPDGGEIGRAQAVQAAACGLEPSVRFNPVLLKPGSDRRSQVVVLGHVSGEVTAMSYRERKAALLDTVVSTLDGLRAEHDHVICEGAGSPAEINLRATDIANMGLARAAGLPVLVVGDIDRGGVFAQLFGTLALLDAADQALVGGFVINKFRGDPALLDSGLDRLRALTGRPVHGVLPWAEDLWLDAEDSLSYVADGVVGRPAPPRGSQWLRVAVPRLPRISNATDVEALAAEPGVAVRFVTEPSRLTDADLVVLPGSKSTVADLGWLHDTGLADAIRAHAGAGLPVVGICGGFQMLTRRITDQVESGVGAVDGLGMLDLEIEFEEAKTLRRPSGTAFGEPVDGYEIHHGVPVRRGDDLAGLVRLPGGTAEGGLSGSVAGTHWHGLFENDAFRRRFLTWAAGCAGRDGFVAAGDTSFAEVRAGQLDLLGDLVEKHLDTDAIRRLLEGGAPAGLPLLPPGAGGRAALRSGGGSE.

In terms of domain architecture, GATase cobBQ-type spans 256 to 438 (WLRVAVPRLP…WHGLFENDAF (183 aa)). Cys-337 (nucleophile) is an active-site residue. The active site involves His-430.

It belongs to the CobB/CobQ family. CobQ subfamily.

It participates in cofactor biosynthesis; adenosylcobalamin biosynthesis. Catalyzes amidations at positions B, D, E, and G on adenosylcobyrinic A,C-diamide. NH(2) groups are provided by glutamine, and one molecule of ATP is hydrogenolyzed for each amidation. The protein is Cobyric acid synthase of Saccharopolyspora erythraea (strain ATCC 11635 / DSM 40517 / JCM 4748 / NBRC 13426 / NCIMB 8594 / NRRL 2338).